Reading from the N-terminus, the 263-residue chain is Hydroxyethylthiazole kinase 1 (263 aa).

M42 contributes to the substrate binding site. ATP-binding residues include K118 and T164. G191 provides a ligand contact to substrate.

This sequence belongs to the Thz kinase family. Mg(2+) is required as a cofactor.

The catalysed reaction is 5-(2-hydroxyethyl)-4-methylthiazole + ATP = 4-methyl-5-(2-phosphooxyethyl)-thiazole + ADP + H(+). Its pathway is cofactor biosynthesis; thiamine diphosphate biosynthesis; 4-methyl-5-(2-phosphoethyl)-thiazole from 5-(2-hydroxyethyl)-4-methylthiazole: step 1/1. Its function is as follows. Catalyzes the phosphorylation of the hydroxyl group of 4-methyl-5-beta-hydroxyethylthiazole (THZ). The protein is Hydroxyethylthiazole kinase 1 of Clostridium botulinum (strain Kyoto / Type A2).